The following is a 344-amino-acid chain: Uroporphyrinogen decarboxylase (344 aa).

Substrate-binding positions include R27–R31, F46, D77, Y153, T208, and H324.

It belongs to the uroporphyrinogen decarboxylase family. Homodimer.

It localises to the cytoplasm. The catalysed reaction is uroporphyrinogen III + 4 H(+) = coproporphyrinogen III + 4 CO2. It participates in porphyrin-containing compound metabolism; protoporphyrin-IX biosynthesis; coproporphyrinogen-III from 5-aminolevulinate: step 4/4. In terms of biological role, catalyzes the decarboxylation of four acetate groups of uroporphyrinogen-III to yield coproporphyrinogen-III. This chain is Uroporphyrinogen decarboxylase, found in Bradyrhizobium diazoefficiens (strain JCM 10833 / BCRC 13528 / IAM 13628 / NBRC 14792 / USDA 110).